Consider the following 71-residue polypeptide: Sec-independent protein translocase protein TatA (71 aa).

Residues 1-21 (MGSFSIWHWLIVLVIVALIFG) traverse the membrane as a helical segment. The interval 48-71 (ADKTEQVTQQQTTIDVQAKEKQNS) is disordered.

This sequence belongs to the TatA/E family. In terms of assembly, the Tat system comprises two distinct complexes: a TatABC complex, containing multiple copies of TatA, TatB and TatC subunits, and a separate TatA complex, containing only TatA subunits. Substrates initially bind to the TatABC complex, which probably triggers association of the separate TatA complex to form the active translocon.

Its subcellular location is the cell inner membrane. Its function is as follows. Part of the twin-arginine translocation (Tat) system that transports large folded proteins containing a characteristic twin-arginine motif in their signal peptide across membranes. TatA could form the protein-conducting channel of the Tat system. This is Sec-independent protein translocase protein TatA from Bordetella avium (strain 197N).